The sequence spans 282 residues: Elongation factor Ts (282 aa).

The tract at residues 80 to 83 (TDFV) is involved in Mg(2+) ion dislocation from EF-Tu.

The protein belongs to the EF-Ts family.

The protein localises to the cytoplasm. In terms of biological role, associates with the EF-Tu.GDP complex and induces the exchange of GDP to GTP. It remains bound to the aminoacyl-tRNA.EF-Tu.GTP complex up to the GTP hydrolysis stage on the ribosome. The sequence is that of Elongation factor Ts from Chlamydia felis (strain Fe/C-56) (Chlamydophila felis).